Here is a 322-residue protein sequence, read N- to C-terminus: Ethylmalonyl-CoA decarboxylase (322 aa).

Lys-232 is subject to N6-acetyllysine; alternate. Residue Lys-232 is modified to N6-succinyllysine; alternate. Lys-316 carries the N6-succinyllysine modification.

Belongs to the enoyl-CoA hydratase/isomerase family.

Its subcellular location is the cytoplasm. It is found in the cytosol. It carries out the reaction (2S)-ethylmalonyl-CoA + H(+) = butanoyl-CoA + CO2. It catalyses the reaction (S)-methylmalonyl-CoA + H(+) = propanoyl-CoA + CO2. The catalysed reaction is (2R)-ethylmalonyl-CoA + H(+) = butanoyl-CoA + CO2. Decarboxylates ethylmalonyl-CoA, a potentially toxic metabolite, to form butyryl-CoA, suggesting it might be involved in metabolite proofreading. Acts preferentially on (S)-ethylmalonyl-CoA but also has some activity on the (R)-isomer. Also has methylmalonyl-CoA decarboxylase activity at lower level. This chain is Ethylmalonyl-CoA decarboxylase (Echdc1), found in Mus musculus (Mouse).